A 355-amino-acid polypeptide reads, in one-letter code: UDP-N-acetylglucosamine--N-acetylmuramyl-(pentapeptide) pyrophosphoryl-undecaprenol N-acetylglucosamine transferase (355 aa).

UDP-N-acetyl-alpha-D-glucosamine contacts are provided by residues 15–17 (TGG), N127, R163, S191, I244, 263–268 (ALTVSE), and Q288.

This sequence belongs to the glycosyltransferase 28 family. MurG subfamily.

Its subcellular location is the cell inner membrane. The enzyme catalyses di-trans,octa-cis-undecaprenyl diphospho-N-acetyl-alpha-D-muramoyl-L-alanyl-D-glutamyl-meso-2,6-diaminopimeloyl-D-alanyl-D-alanine + UDP-N-acetyl-alpha-D-glucosamine = di-trans,octa-cis-undecaprenyl diphospho-[N-acetyl-alpha-D-glucosaminyl-(1-&gt;4)]-N-acetyl-alpha-D-muramoyl-L-alanyl-D-glutamyl-meso-2,6-diaminopimeloyl-D-alanyl-D-alanine + UDP + H(+). It functions in the pathway cell wall biogenesis; peptidoglycan biosynthesis. In terms of biological role, cell wall formation. Catalyzes the transfer of a GlcNAc subunit on undecaprenyl-pyrophosphoryl-MurNAc-pentapeptide (lipid intermediate I) to form undecaprenyl-pyrophosphoryl-MurNAc-(pentapeptide)GlcNAc (lipid intermediate II). This is UDP-N-acetylglucosamine--N-acetylmuramyl-(pentapeptide) pyrophosphoryl-undecaprenol N-acetylglucosamine transferase from Salmonella arizonae (strain ATCC BAA-731 / CDC346-86 / RSK2980).